A 61-amino-acid polypeptide reads, in one-letter code: Large ribosomal subunit protein uL30 (61 aa).

This sequence belongs to the universal ribosomal protein uL30 family. As to quaternary structure, part of the 50S ribosomal subunit.

In Frankia casuarinae (strain DSM 45818 / CECT 9043 / HFP020203 / CcI3), this protein is Large ribosomal subunit protein uL30.